Consider the following 138-residue polypeptide: Transcription antitermination protein NusB (138 aa).

This sequence belongs to the NusB family.

In terms of biological role, involved in transcription antitermination. Required for transcription of ribosomal RNA (rRNA) genes. Binds specifically to the boxA antiterminator sequence of the ribosomal RNA (rrn) operons. The chain is Transcription antitermination protein NusB from Leptospira interrogans serogroup Icterohaemorrhagiae serovar copenhageni (strain Fiocruz L1-130).